The primary structure comprises 170 residues: Protein-lysine myristoyltransferase HlyC (170 aa).

The active site involves H23. A heme-binding site is contributed by H151.

This sequence belongs to the RTX toxin acyltransferase family. Monomer. In terms of processing, proteolytically cleaved by the protease systems ClpAP, ClpXP and FtsH, leading to its degradation.

The protein localises to the cytoplasm. The catalysed reaction is tetradecanoyl-[ACP] + L-lysyl-[protein] = N(6)-tetradecanoyl-L-lysyl-[protein] + holo-[ACP] + H(+). With respect to regulation, the acyltransferase activity is inhibited by heme. In terms of biological role, protein-lysine myristoyltransferase that catalyzes myristoylation of the protoxin (HlyA) at two internal lysine residues, thereby converting it to the active toxin. The chain is Protein-lysine myristoyltransferase HlyC from Escherichia coli.